The sequence spans 970 residues: MAAQCGGYMNQSDPGSNSERSADSPLPGSEDDSPGSAAPHDPEWREERFRVDRKKLETMLQAAAEGKGKSGEDFFQKIMEETNTQIAWPSKLKIGAKSKKDPHIKVSGKKENVKEAKERIMSVLDTKSNRVTLKMDVSHTEHSHVIGKGGNNIKKVMEETGCHIHFPDSNRNNQAEKSNQVSIAGQPAGVESARVRIRELLPLVLMFELPIAGILQPIPDPNSPTIQQISQTYNITVSFKQRSRVYGATVIVRGSQNNTSAVKEGTAMLLEHLAGSLASAIPVSTQLDIAAQHHLFMMGRNGCNIKHIMQRTGAQIHFPDPNNPLKKSTVYLQGTIESVCLARQYLMGCLPLVLMFDMKEEIEVEPQCITQLMEQLDVFISIKPKPKQPSKSVIVKSVERNALNMYEARKCLLGLDSSGVTITNQSTISCPIPMNCHGLDILAAGLGLSGLGLLGPNTLSVNSTTAQNSLLNALNSSVSPLHSPSSAAPSPTLWATSLANTSNATGFPAIPHLMIPSAAQATLTNFLLSGVPNYGQNTPSPPPGLTPVDVHMNGLHSECKKVTSVLNGHVKPTNMKYGTISSSSLGDKVLNTNLAEASRQSNNHSSAEEVNSKTDSEGCNDAFVEVGMPRSPSHSANTKDLKQMLNSTKAPCPTRQTVKLLHGTKNSHLHTAERLLSDSEMSPTEGPMTDKKAPGSERAAERAAAQHNCEMARFTSQSAYGNMQAYDYEQKKLLATKAMLKKPVVTEVRTPTNTWSGLGFSKSMPAETIKELRRANHVPYKPTMSTTYENSPMSLSRSNSREQLGNGSDSDNWRERNGIDSSHNDYSSSIGSPKRKQNKSAEHYLSSSNYMDCISSLTGSNGCNLNSSFKGSDLPELFSKLGLGKYTDIFQQQEIDLQTFLTLTDQDLKELGITTFGARRKMLLAISELNKNRRKLFEPTNIRSSFLEGGASGRLPRQYHTDIASVSGRW.

Positions 1–50 are disordered; it reads MAAQCGGYMNQSDPGSNSERSADSPLPGSEDDSPGSAAPHDPEWREERFR. Positions 9 to 19 are enriched in polar residues; that stretch reads MNQSDPGSNSE. Over residues 40-50 the composition is skewed to basic and acidic residues; sequence HDPEWREERFR. KH domains follow at residues 130–197 and 282–346; these read RVTL…RVRI and PVST…RQYL. A compositionally biased stretch (polar residues) spans 596–605; it reads EASRQSNNHS. Disordered stretches follow at residues 596-638, 677-696, and 773-841; these read EASR…SANT, SDSEMSPTEGPMTDKKAPGS, and RRAN…NKSA. Residues 606–616 are compositionally biased toward basic and acidic residues; sequence SAEEVNSKTDS. Composition is skewed to polar residues over residues 783–810 and 819–831; these read TMSTTYENSPMSLSRSNSREQLGNGSDS and IDSSHNDYSSSIG. In terms of domain architecture, SAM spans 869–932; it reads FKGSDLPELF…LLAISELNKN (64 aa).

The protein belongs to the BicC family.

Its function is as follows. Putative RNA-binding protein. May be involved in regulating gene expression during embryonic development. Seems to be involved in endoderm formation. Ectopic expression results in endoderm formation in the absence of mesoderm induction. The polypeptide is Protein bicaudal C homolog 1-B (bicc1-b) (Xenopus laevis (African clawed frog)).